Reading from the N-terminus, the 1366-residue chain is DNA-directed RNA polymerase subunit beta (1366 aa).

It belongs to the RNA polymerase beta chain family. In terms of assembly, the RNAP catalytic core consists of 2 alpha, 1 beta, 1 beta' and 1 omega subunit. When a sigma factor is associated with the core the holoenzyme is formed, which can initiate transcription.

The enzyme catalyses RNA(n) + a ribonucleoside 5'-triphosphate = RNA(n+1) + diphosphate. Functionally, DNA-dependent RNA polymerase catalyzes the transcription of DNA into RNA using the four ribonucleoside triphosphates as substrates. The polypeptide is DNA-directed RNA polymerase subunit beta (Polynucleobacter necessarius subsp. necessarius (strain STIR1)).